We begin with the raw amino-acid sequence, 584 residues long: Beta-fructofuranosidase, insoluble isoenzyme CWINV1 (584 aa).

An N-terminal signal peptide occupies residues 1 to 28; that stretch reads MTKEVCSNIGLWLLLTLLIGNYVVNLEA. Substrate contacts are provided by residues 63-66, Gln-82, Trp-90, and 125-126; these read WMND and WS. Residue Asp-66 is part of the active site. 2 N-linked (GlcNAc...) asparagine glycosylation sites follow: Asn-159 and Asn-186. Substrate contacts are provided by residues 191 to 192, Glu-246, and Asp-282; that span reads RD. N-linked (GlcNAc...) asparagine glycosylation is found at Asn-342 and Asn-446. Cys-442 and Cys-491 are disulfide-bonded.

The protein belongs to the glycosyl hydrolase 32 family. In terms of tissue distribution, expressed in seedlings, leaves, flowers, and seeds.

The protein localises to the secreted. It localises to the extracellular space. The protein resides in the apoplast. It is found in the cell wall. It catalyses the reaction Hydrolysis of terminal non-reducing beta-D-fructofuranoside residues in beta-D-fructofuranosides.. Its function is as follows. Beta-fructofuranosidase that can use sucrose and 1-kestose, and, to a lower extent, neokestose and levan, as substrates, but not inuline. This Arabidopsis thaliana (Mouse-ear cress) protein is Beta-fructofuranosidase, insoluble isoenzyme CWINV1 (CWINV1).